Here is a 148-residue protein sequence, read N- to C-terminus: Transcriptional regulator MraZ (148 aa).

2 SpoVT-AbrB domains span residues Ala-5 to Ala-51 and Ala-80 to Ala-123.

This sequence belongs to the MraZ family. As to quaternary structure, forms oligomers.

It is found in the cytoplasm. It localises to the nucleoid. In Methylobacillus flagellatus (strain ATCC 51484 / DSM 6875 / VKM B-1610 / KT), this protein is Transcriptional regulator MraZ.